Reading from the N-terminus, the 346-residue chain is NADH-ubiquinone oxidoreductase chain 2 (346 aa).

9 consecutive transmembrane segments (helical) span residues 7–27, 59–79, 93–115, 151–171, 178–198, 200–220, 242–262, 275–294, and 325–345; these read AIIT…NHWI, YFLT…MNMW, ISCT…HFWF, TTLL…GGLN, IMAF…TLSP, ILLL…LMIN, TMML…GFAP, LSMF…YFYL, and LATI…LKAI.

The protein belongs to the complex I subunit 2 family.

It localises to the mitochondrion inner membrane. It carries out the reaction a ubiquinone + NADH + 5 H(+)(in) = a ubiquinol + NAD(+) + 4 H(+)(out). In terms of biological role, core subunit of the mitochondrial membrane respiratory chain NADH dehydrogenase (Complex I) that is believed to belong to the minimal assembly required for catalysis. Complex I functions in the transfer of electrons from NADH to the respiratory chain. The immediate electron acceptor for the enzyme is believed to be ubiquinone. In Pelomedusa subrufa (African side-necked turtle), this protein is NADH-ubiquinone oxidoreductase chain 2 (MT-ND2).